Reading from the N-terminus, the 83-residue chain is uncharacterized protein (83 aa).

Residues F55–V75 traverse the membrane as a helical segment.

Its subcellular location is the host membrane. Its function is as follows. May play a role in phage assembly. This is an uncharacterized protein from Pseudomonas phage Pf1 (Bacteriophage Pf1).